The following is a 274-amino-acid chain: ATP synthase subunit a (274 aa).

5 consecutive transmembrane segments (helical) span residues 40–60 (FWVCNFDSIFLSIFLGLVILI), 110–130 (IFVWIFLMNLMDLIPIDLVPF), 149–169 (DVNITISMSLVVFLLIIFYSI), 224–244 (IFILISGLLPWWLQWILSVPW), and 245–265 (AIFHILIISLQSFIFMVLTIV).

It belongs to the ATPase A chain family. As to quaternary structure, F-type ATPases have 2 components, CF(1) - the catalytic core - and CF(0) - the membrane proton channel. CF(1) has five subunits: alpha(3), beta(3), gamma(1), delta(1), epsilon(1). CF(0) has three main subunits: a(1), b(2) and c(9-12). The alpha and beta chains form an alternating ring which encloses part of the gamma chain. CF(1) is attached to CF(0) by a central stalk formed by the gamma and epsilon chains, while a peripheral stalk is formed by the delta and b chains.

It localises to the cell membrane. In terms of biological role, key component of the proton channel; it plays a direct role in the translocation of protons across the membrane. This chain is ATP synthase subunit a, found in Buchnera aphidicola subsp. Baizongia pistaciae (strain Bp).